We begin with the raw amino-acid sequence, 312 residues long: Undecaprenyl-diphosphatase (312 aa).

7 consecutive transmembrane segments (helical) span residues Gly74–Trp94, Val122–Ile142, Val154–Gly174, Leu183–Val203, Phe226–Leu246, Val254–Ile274, and Ile288–Val308.

The protein belongs to the UppP family.

Its subcellular location is the cell inner membrane. The catalysed reaction is di-trans,octa-cis-undecaprenyl diphosphate + H2O = di-trans,octa-cis-undecaprenyl phosphate + phosphate + H(+). Functionally, catalyzes the dephosphorylation of undecaprenyl diphosphate (UPP). Confers resistance to bacitracin. The sequence is that of Undecaprenyl-diphosphatase from Trichodesmium erythraeum (strain IMS101).